The sequence spans 151 residues: Methylated-DNA--protein-cysteine methyltransferase (151 aa).

Cysteine 119 functions as the Nucleophile; methyl group acceptor in the catalytic mechanism.

This sequence belongs to the MGMT family.

The protein localises to the cytoplasm. It carries out the reaction a 6-O-methyl-2'-deoxyguanosine in DNA + L-cysteinyl-[protein] = S-methyl-L-cysteinyl-[protein] + a 2'-deoxyguanosine in DNA. The enzyme catalyses a 4-O-methyl-thymidine in DNA + L-cysteinyl-[protein] = a thymidine in DNA + S-methyl-L-cysteinyl-[protein]. Involved in the cellular defense against the biological effects of O6-methylguanine (O6-MeG) and O4-methylthymine (O4-MeT) in DNA. Repairs the methylated nucleobase in DNA by stoichiometrically transferring the methyl group to a cysteine residue in the enzyme. This is a suicide reaction: the enzyme is irreversibly inactivated. The protein is Methylated-DNA--protein-cysteine methyltransferase of Saccharolobus islandicus (strain Y.N.15.51 / Yellowstone #2) (Sulfolobus islandicus).